The primary structure comprises 133 residues: Small ribosomal subunit protein bS16 (133 aa).

Residues 99–133 (EKWQQNQTERRQKRLAVKTRRRQAKKAAEAKGAEA) form a disordered region. The segment covering 109 to 123 (RQKRLAVKTRRRQAK) has biased composition (basic residues). Basic and acidic residues predominate over residues 124-133 (KAAEAKGAEA).

This sequence belongs to the bacterial ribosomal protein bS16 family.

The sequence is that of Small ribosomal subunit protein bS16 from Chlorobium limicola (strain DSM 245 / NBRC 103803 / 6330).